Reading from the N-terminus, the 600-residue chain is Baculoviral IAP repeat-containing protein 3 (600 aa).

The BIR 1 repeat unit spans residues 27 to 94 (ELYRLSTYSA…RKLYPSCNFV (68 aa)). The residue at position 138 (Ser138) is a Phosphoserine. 2 BIR repeats span residues 167–233 (EKAR…CPFL) and 253–320 (HAAR…CEYL). Zn(2+)-binding residues include Cys290, Cys293, His310, and Cys317. Residues 436–525 (EESDDLALIR…ALYRDIFVQQ (90 aa)) form the CARD domain. The RING-type zinc finger occupies 553–588 (CKVCMDREVSIVFIPCGHLVVCKDCAPSLRKCPICR).

The protein belongs to the IAP family. Interacts with PRSS25; the interaction inhibits apoptotic suppressor activity. The BIR motifs region interacts with TNF receptor associated factors 1 and 2 (TRAF1 and TRAF2) to form a heteromeric complex, which is then recruited to the tumor necrosis factor receptor 2 (TNFR2). Interaction with TRAF2 is required for ubiquitination of IKBKE, degradation of NFKBIA and activation of NF-kappa-B. Interacts with RIP1, RIP2, RIP3, RIP4 and USP19. In terms of processing, auto-ubiquitinated and degraded by the proteasome in apoptotic cells.

Its subcellular location is the cytoplasm. The protein localises to the nucleus. It catalyses the reaction S-ubiquitinyl-[E2 ubiquitin-conjugating enzyme]-L-cysteine + [acceptor protein]-L-lysine = [E2 ubiquitin-conjugating enzyme]-L-cysteine + N(6)-ubiquitinyl-[acceptor protein]-L-lysine.. Its activity is regulated as follows. USP19 regulates the stability of BIRC3/c-IAP2 by preventing its ubiquitination. In terms of biological role, multi-functional protein which regulates not only caspases and apoptosis, but also modulates inflammatory signaling and immunity, mitogenic kinase signaling and cell proliferation, as well as cell invasion and metastasis. Acts as an E3 ubiquitin-protein ligase regulating NF-kappa-B signaling and regulates both canonical and non-canonical NF-kappa-B signaling by acting in opposite directions: acts as a positive regulator of the canonical pathway and suppresses constitutive activation of non-canonical NF-kappa-B signaling. The target proteins for its E3 ubiquitin-protein ligase activity include: RIPK1, RIPK2, RIPK3, RIPK4, CASP3, CASP7, CASP8, IKBKE, TRAF1, and BCL10. Acts as an important regulator of innate immune signaling via regulation of Toll-like receptors (TLRs), Nodlike receptors (NLRs) and RIG-I like receptors (RLRs), collectively referred to as pattern recognition receptors (PRRs). Protects cells from spontaneous formation of the ripoptosome, a large multi-protein complex that has the capability to kill cancer cells in a caspase-dependent and caspase-independent manner. Suppresses ripoptosome formation by ubiquitinating RIPK1 and CASP8. This is Baculoviral IAP repeat-containing protein 3 (Birc3) from Mus musculus (Mouse).